A 275-amino-acid chain; its full sequence is Methylthioribulose-1-phosphate dehydratase (275 aa).

Residue Cys125 coordinates substrate. Residues His143 and His145 each coordinate Zn(2+). Catalysis depends on Glu168, which acts as the Proton donor/acceptor. Position 233 (His233) interacts with Zn(2+).

Belongs to the aldolase class II family. MtnB subfamily. It depends on Zn(2+) as a cofactor.

It is found in the cytoplasm. The enzyme catalyses 5-(methylsulfanyl)-D-ribulose 1-phosphate = 5-methylsulfanyl-2,3-dioxopentyl phosphate + H2O. Its pathway is amino-acid biosynthesis; L-methionine biosynthesis via salvage pathway; L-methionine from S-methyl-5-thio-alpha-D-ribose 1-phosphate: step 2/6. Catalyzes the dehydration of methylthioribulose-1-phosphate (MTRu-1-P) into 2,3-diketo-5-methylthiopentyl-1-phosphate (DK-MTP-1-P). This chain is Methylthioribulose-1-phosphate dehydratase, found in Lodderomyces elongisporus (strain ATCC 11503 / CBS 2605 / JCM 1781 / NBRC 1676 / NRRL YB-4239) (Yeast).